The primary structure comprises 296 residues: NADH-cytochrome b5 reductase 2 (296 aa).

Residues 12–29 form a helical membrane-spanning segment; it reads LPIALGVGAASIATAIIL. Positions 47 to 151 constitute an FAD-binding FR-type domain; it reads NEWIDLPIIK…KGPITKWEWK (105 aa). FAD is bound at residue 154–189; the sequence is SYDSITLLGAGTGINPLYQLVHHIAENPEDNTKIHL.

This sequence belongs to the flavoprotein pyridine nucleotide cytochrome reductase family. Requires FAD as cofactor.

The protein resides in the mitochondrion outer membrane. The enzyme catalyses 2 Fe(III)-[cytochrome b5] + NADH = 2 Fe(II)-[cytochrome b5] + NAD(+) + H(+). Its function is as follows. May mediate the reduction of outer membrane cytochrome b5. The sequence is that of NADH-cytochrome b5 reductase 2 (MCR1) from Kluyveromyces lactis (strain ATCC 8585 / CBS 2359 / DSM 70799 / NBRC 1267 / NRRL Y-1140 / WM37) (Yeast).